A 155-amino-acid chain; its full sequence is Large ribosomal subunit protein uL13 (155 aa).

Belongs to the universal ribosomal protein uL13 family. Part of the 50S ribosomal subunit.

Functionally, this protein is one of the early assembly proteins of the 50S ribosomal subunit, although it is not seen to bind rRNA by itself. It is important during the early stages of 50S assembly. This chain is Large ribosomal subunit protein uL13, found in Rickettsia conorii (strain ATCC VR-613 / Malish 7).